A 220-amino-acid chain; its full sequence is Telomere repeats-binding bouquet formation protein 2 (220 aa).

Belongs to the TERB2 family. As to quaternary structure, component of the MAJIN-TERB1-TERB2 complex, composed of MAJIN, TERB1 and TERB2.

It is found in the chromosome. It localises to the telomere. The protein resides in the nucleus inner membrane. Functionally, meiosis-specific telomere-associated protein involved in meiotic telomere attachment to the nucleus inner membrane, a crucial step for homologous pairing and synapsis. Component of the MAJIN-TERB1-TERB2 complex, which promotes telomere cap exchange by mediating attachment of telomeric DNA to the inner nuclear membrane and replacement of the protective cap of telomeric chromosomes: in early meiosis, the MAJIN-TERB1-TERB2 complex associates with telomeric DNA and the shelterin/telosome complex. During prophase, the complex matures and promotes release of the shelterin/telosome complex from telomeric DNA. This chain is Telomere repeats-binding bouquet formation protein 2 (TERB2), found in Homo sapiens (Human).